Reading from the N-terminus, the 378-residue chain is Lipid-A-disaccharide synthase (378 aa).

This sequence belongs to the LpxB family.

It catalyses the reaction a lipid X + a UDP-2-N,3-O-bis[(3R)-3-hydroxyacyl]-alpha-D-glucosamine = a lipid A disaccharide + UDP + H(+). Its pathway is bacterial outer membrane biogenesis; LPS lipid A biosynthesis. Functionally, condensation of UDP-2,3-diacylglucosamine and 2,3-diacylglucosamine-1-phosphate to form lipid A disaccharide, a precursor of lipid A, a phosphorylated glycolipid that anchors the lipopolysaccharide to the outer membrane of the cell. This Methylobacillus flagellatus (strain ATCC 51484 / DSM 6875 / VKM B-1610 / KT) protein is Lipid-A-disaccharide synthase.